We begin with the raw amino-acid sequence, 100 residues long: Small ribosomal subunit protein uS14c (100 aa).

Belongs to the universal ribosomal protein uS14 family. In terms of assembly, part of the 30S ribosomal subunit.

Its subcellular location is the plastid. It is found in the chloroplast. Binds 16S rRNA, required for the assembly of 30S particles. The chain is Small ribosomal subunit protein uS14c from Eucalyptus globulus subsp. globulus (Tasmanian blue gum).